The primary structure comprises 98 residues: NADH-ubiquinone oxidoreductase chain 4L (98 aa).

The next 3 helical transmembrane spans lie at 1–21 (MTLV…GLLM), 26–46 (LMSA…LATI), and 59–79 (MPII…ALLV).

The protein belongs to the complex I subunit 4L family. Core subunit of respiratory chain NADH dehydrogenase (Complex I) which is composed of 45 different subunits.

It is found in the mitochondrion inner membrane. It carries out the reaction a ubiquinone + NADH + 5 H(+)(in) = a ubiquinol + NAD(+) + 4 H(+)(out). Functionally, core subunit of the mitochondrial membrane respiratory chain NADH dehydrogenase (Complex I) which catalyzes electron transfer from NADH through the respiratory chain, using ubiquinone as an electron acceptor. Part of the enzyme membrane arm which is embedded in the lipid bilayer and involved in proton translocation. In Pontoporia blainvillei (Franciscana), this protein is NADH-ubiquinone oxidoreductase chain 4L (MT-ND4L).